We begin with the raw amino-acid sequence, 231 residues long: uncharacterized protein (231 aa).

The region spanning 3-119 (RADFCIIGLG…RTMGIREALI (117 aa)) is the RCK N-terminal domain. The RCK C-terminal domain maps to 134–221 (HGMETEIINL…VNQYLRYINP (88 aa)).

This is an uncharacterized protein from Mycoplasma pneumoniae (strain ATCC 29342 / M129 / Subtype 1) (Mycoplasmoides pneumoniae).